We begin with the raw amino-acid sequence, 199 residues long: CASP-like protein 1B2 (199 aa).

Topologically, residues 1–22 (MALQSEEKLEVGYSSLQPKTRK) are cytoplasmic. Residues 23–43 (WVLLMLRVLAFFATAAATVVM) traverse the membrane as a helical segment. Over 44 to 74 (GLNKETKTLVVATVGSTPIKASLAAKFQHTP) the chain is Extracellular. A helical membrane pass occupies residues 75–95 (AFVFFVIANGLASIHNLVMIM). Residues 96–112 (GDLFGQKLDYKGLRLAM) lie on the Cytoplasmic side of the membrane. A helical transmembrane segment spans residues 113–133 (IAILDMMTVALVSGGVSAAAF). Over 134-163 (MAELGKNGNSHARWNKICDKFETFCDHGGG) the chain is Extracellular. A helical transmembrane segment spans residues 164–184 (ALIASFAGLILMLIISVMSII). Residues 185 to 199 (KLLIKPKPDSTIVVP) lie on the Cytoplasmic side of the membrane.

Belongs to the Casparian strip membrane proteins (CASP) family. In terms of assembly, homodimer and heterodimers.

It is found in the cell membrane. This Populus trichocarpa (Western balsam poplar) protein is CASP-like protein 1B2.